The primary structure comprises 286 residues: Thymidylate synthase (286 aa).

DUMP contacts are provided by residues Arg-21 and 136-137; that span reads RR. Residue Cys-156 is the Nucleophile of the active site. Residues 176-179, Asn-187, and 217-219 contribute to the dUMP site; these read RSVD and HIY. Residue Asp-179 participates in (6R)-5,10-methylene-5,6,7,8-tetrahydrofolate binding. Ala-285 provides a ligand contact to (6R)-5,10-methylene-5,6,7,8-tetrahydrofolate.

It belongs to the thymidylate synthase family. Homodimer.

It catalyses the reaction dUMP + (6R)-5,10-methylene-5,6,7,8-tetrahydrofolate = 7,8-dihydrofolate + dTMP. Its pathway is pyrimidine metabolism; dTTP biosynthesis. In Enterobacteria phage T4 (Bacteriophage T4), this protein is Thymidylate synthase (TD).